The chain runs to 29 residues: GILDSLKNFAKDAAGILLKKASCKLSGQC.

Cys-23 and Cys-29 are oxidised to a cystine.

As to expression, expressed by the skin glands.

The protein localises to the secreted. Antimicrobial peptide. The protein is Brevinin-2Ra of Pelophylax ridibundus (Marsh frog).